The primary structure comprises 215 residues: Ribonuclease T (215 aa).

The 175-residue stretch at 20–194 (VVIDVETAGF…YDTERTAVLF (175 aa)) folds into the Exonuclease domain. Mg(2+) is bound by residues D23, E25, H181, and D186. H181 serves as the catalytic Proton donor/acceptor.

Belongs to the RNase T family. Homodimer. Requires Mg(2+) as cofactor.

Its function is as follows. Trims short 3' overhangs of a variety of RNA species, leaving a one or two nucleotide 3' overhang. Responsible for the end-turnover of tRNA: specifically removes the terminal AMP residue from uncharged tRNA (tRNA-C-C-A). Also appears to be involved in tRNA biosynthesis. This is Ribonuclease T from Salmonella choleraesuis (strain SC-B67).